Reading from the N-terminus, the 135-residue chain is uncharacterized protein (135 aa).

A disordered region spans residues 1–75; sequence MAAATETGQA…PPPRPPQRRC (75 aa).

This is an uncharacterized protein from Homo sapiens (Human).